Here is a 325-residue protein sequence, read N- to C-terminus: Small ribosomal subunit protein uS3 (325 aa).

In terms of domain architecture, KH type-2 spans 38-106 (IRKMMSKGME…QVQLNILEVK (69 aa)). Positions 217–325 (EALLRQQRRE…AQGAPEKAEG (109 aa)) are disordered. Residues 222-232 (QQRRERPRRGP) show a composition bias toward basic residues. Positions 285–316 (TESAAVEGTPVETPAVTPETTAAPAAVTTAEA) are enriched in low complexity.

Belongs to the universal ribosomal protein uS3 family. Part of the 30S ribosomal subunit. Forms a tight complex with proteins S10 and S14.

Functionally, binds the lower part of the 30S subunit head. Binds mRNA in the 70S ribosome, positioning it for translation. The sequence is that of Small ribosomal subunit protein uS3 from Parafrankia sp. (strain EAN1pec).